A 263-amino-acid chain; its full sequence is Pheophorbidase (263 aa).

In terms of domain architecture, AB hydrolase-1 spans 13 to 244 (HFVFVHGASH…LEESDHSAFF (232 aa)). Ser88 serves as the catalytic Acyl-ester intermediate. Residues Asp212 and His240 each act as charge relay system in the active site.

Belongs to the AB hydrolase superfamily. Homodimer.

Its subcellular location is the cytoplasm. The enzyme catalyses pheophorbide a + H2O + H(+) = pyropheophorbide a + methanol + CO2. Inhibited by methanol and phenylmethylsulfonicfluoride (PMSF). Functionally, involved in chlorophyll degradation. Specific for the pheophorbides of the dihydroporphyrin and tetrahydroporphyrin types. Chlorophyllide a, pheophytin a and the nonfluorescent chlorophyll catabolite (NCC) are not used as substrates. This chain is Pheophorbidase (PPD), found in Raphanus sativus (Radish).